The sequence spans 381 residues: Cobalt-precorrin-5B C(1)-methyltransferase (381 aa).

Belongs to the CbiD family.

The enzyme catalyses Co-precorrin-5B + S-adenosyl-L-methionine = Co-precorrin-6A + S-adenosyl-L-homocysteine. The protein operates within cofactor biosynthesis; adenosylcobalamin biosynthesis; cob(II)yrinate a,c-diamide from sirohydrochlorin (anaerobic route): step 6/10. Functionally, catalyzes the methylation of C-1 in cobalt-precorrin-5B to form cobalt-precorrin-6A. In Prochlorococcus marinus (strain NATL2A), this protein is Cobalt-precorrin-5B C(1)-methyltransferase.